Reading from the N-terminus, the 1214-residue chain is Protein charlatan (1214 aa).

Disordered stretches follow at residues 1-20, 213-238, and 250-284; these read MATL…QSSN, HVNQ…RQEH, and SANA…GGRK. The segment covering 258–276 has biased composition (low complexity); that stretch reads AQSTPTSAPSNSSGGSTSS. 2 consecutive C2H2-type zinc fingers follow at residues 305–327 and 333–356; these read YACT…ENIH and FQCY…LRMH. 2 disordered regions span residues 367–397 and 463–488; these read RRHV…NVTI and PVAS…SGLL. Over residues 473 to 485 the composition is skewed to gly residues; that stretch reads GSHGGNGNGGSGS. 2 C2H2-type zinc fingers span residues 496-518 and 522-545; these read FTCC…LNTH and FVCL…LKVH. Disordered regions lie at residues 741–790, 848–946, and 1062–1084; these read SASS…ATSP, NDED…SGPS, and LSTP…SNAS. Composition is skewed to low complexity over residues 855–871, 885–896, 923–946, and 1071–1084; these read QQHQ…QQQQ, NNNNNNNSNNNN, SPGT…SGPS, and KAAP…SNAS.

In terms of tissue distribution, expressed in the PNS and CNS. In early blastoderm stages, it is ubiquitously expressed, then, before stage 5, it disappears from the poles of the embryo and faint stripes are visible. At stage 5, it also accumulates in the dorsal region, cephalic furrow ectodermal patches between the tracheal pits, where neurons of the PNS appear. In older embryos (stage 15) a strong expression is mostly restricted to the central nervous system (CNS) and PNS. In PNS, the pattern suggests that expression occur in many of the neurons of the ventral, lateral and dorsal clusters of neurons. In third instar wing disks, it is expressed in rows of cells on either side of the prospective anterior wing margin and in groups of cells that coincide with proneural clusters of ac/sc expression. Also expressed independently of ac/sc in certain areas of the disk, such as the postnotum and posterior dorsal proximal wing. Expressed in the proneural clusters of the leg disks and in the eye/antenna disk.

Its subcellular location is the nucleus. Probable transcription factor involved in the development of the adult pattern of macrochaetae. Required for accumulation of achaete (ac) and scute (sc) in proneural clusters. Probably acts by binding to the proneural cluster-specific enhancers of the ac/sc complex and increasing enhancer efficiency, thereby acting as a stimulator of ac/sc expression in proneural clusters. Also required for correct development of the embryonic/larval peripheral nervous system (PNS). In Drosophila melanogaster (Fruit fly), this protein is Protein charlatan (chn).